We begin with the raw amino-acid sequence, 387 residues long: tRNA-specific 2-thiouridylase MnmA (387 aa).

ATP is bound by residues 34–41 (AMSGGVDS) and Met-60. Catalysis depends on Cys-127, which acts as the Nucleophile. Cys-127 and Cys-223 are oxidised to a cystine. Position 151 (Gly-151) interacts with ATP. The tract at residues 173 to 175 (KDQ) is interaction with tRNA. Cys-223 functions as the Cysteine persulfide intermediate in the catalytic mechanism.

Belongs to the MnmA/TRMU family.

The protein resides in the cytoplasm. The catalysed reaction is S-sulfanyl-L-cysteinyl-[protein] + uridine(34) in tRNA + AH2 + ATP = 2-thiouridine(34) in tRNA + L-cysteinyl-[protein] + A + AMP + diphosphate + H(+). In terms of biological role, catalyzes the 2-thiolation of uridine at the wobble position (U34) of tRNA, leading to the formation of s(2)U34. The chain is tRNA-specific 2-thiouridylase MnmA from Anaplasma marginale (strain St. Maries).